We begin with the raw amino-acid sequence, 119 residues long: MAVFLLATSTIMFPTKIEAADCNGACSPFEVPPCRSSDCRCVPIGLFVGFCIHPTGLSSVAKMVDEHPNLCQSDDECMKKGSGNFCARYPNNYIDYGWCFDSDSEALKGFLAMPRATTK.

The N-terminal stretch at 1-19 is a signal peptide; it reads MAVFLLATSTIMFPTKIEA. 3 disulfides stabilise this stretch: cysteine 22/cysteine 39, cysteine 26/cysteine 41, and cysteine 34/cysteine 51. 2 propeptides span residues 57 to 64 and 118 to 119; these read LSSVAKMV and TK.

In terms of processing, the C-terminal glycine may be removed from A1b.

A1b binds to basic 7S globulin (BG) and stimulates its phosphorylation activity. The polypeptide is Albumin-1 (Glycine soja (Wild soybean)).